A 373-amino-acid polypeptide reads, in one-letter code: 3 beta-hydroxysteroid dehydrogenase/Delta 5--&gt;4-isomerase type 1 (373 aa).

Residues 10-15, Y155, and K159 each bind NADP(+); that span reads GAGGFL. The active-site Proton donor is the K159. The helical transmembrane segment at 288–308 threads the bilayer; it reads VALLYWLGFLLELVSFLLRPV.

Belongs to the 3-beta-HSD family. In terms of tissue distribution, high levels in adrenal gland, kidney and male liver. Low levels in female liver.

The protein localises to the endoplasmic reticulum membrane. The protein resides in the mitochondrion membrane. The enzyme catalyses a 3beta-hydroxy-Delta(5)-steroid + NAD(+) = a 3-oxo-Delta(5)-steroid + NADH + H(+). The catalysed reaction is pregnenolone + NAD(+) = pregn-5-ene-3,20-dione + NADH + H(+). It catalyses the reaction 3beta-hydroxyandrost-5-en-17-one + NAD(+) = androst-5-ene-3,17-dione + NADH + H(+). It carries out the reaction androst-5-en-3beta,17beta-diol + NAD(+) = 17beta-hydroxy-androst-5-en-3-one + NADH + H(+). The enzyme catalyses a 3beta-hydroxysteroid + NADP(+) = a 3-oxosteroid + NADPH + H(+). The catalysed reaction is 5alpha-androstane-3beta,17beta-diol + NADP(+) = 17beta-hydroxy-5alpha-androstan-3-one + NADPH + H(+). It catalyses the reaction 3beta-hydroxy-5alpha-androstan-17-one + NADP(+) = 5alpha-androstan-3,17-dione + NADPH + H(+). It carries out the reaction a 3-oxo-Delta(5)-steroid = a 3-oxo-Delta(4)-steroid. The enzyme catalyses pregn-5-ene-3,20-dione = progesterone. The catalysed reaction is androst-5-ene-3,17-dione = androst-4-ene-3,17-dione. It catalyses the reaction 17beta-hydroxy-androst-5-en-3-one = testosterone. It carries out the reaction 5alpha-androstane-3beta,17beta-diol + NAD(+) = 17beta-hydroxy-5alpha-androstan-3-one + NADH + H(+). It participates in steroid hormone biosynthesis. Its pathway is steroid metabolism. A bifunctional enzyme responsible for the oxidation and isomerization of 3beta-hydroxy-Delta(5)-steroid precursors to 3-oxo-Delta(4)-steroids, an essential step in steroid hormone biosynthesis. Specifically catalyzes the conversion of pregnenolone to progesterone, 17alpha-hydroxypregnenolone to 17alpha-hydroxyprogesterone, dehydroepiandrosterone (DHEA) to 4-androstenedione, and androstenediol to testosterone. Additionally, catalyzes the interconversion between 3beta-hydroxy and 3-oxo-5alpha-androstane steroids controlling the bioavalability of the active forms. Specifically converts dihydrotestosterone to its inactive form 5alpha-androstanediol, that does not bind androgen receptor/AR. Also converts androstanedione, a precursor of testosterone and estrone, to epiandrosterone. Expected to use NAD(+) as preferred electron donor for the 3-beta-hydroxy-steroid dehydrogenase activity and NADPH for the 3-ketosteroid reductase activity. In Mesocricetus auratus (Golden hamster), this protein is 3 beta-hydroxysteroid dehydrogenase/Delta 5--&gt;4-isomerase type 1 (HSD3B1).